The chain runs to 466 residues: Argininosuccinate lyase (466 aa).

Ser27, Asn114, and Thr159 together coordinate 2-(N(omega)-L-arginino)succinate. The Proton acceptor role is filled by His160. Ser281 acts as the Proton donor in catalysis. Positions 289, 321, 326, and 329 each coordinate 2-(N(omega)-L-arginino)succinate.

Belongs to the lyase 1 family. Argininosuccinate lyase subfamily. As to quaternary structure, homotetramer. In terms of tissue distribution, eye lens.

It catalyses the reaction 2-(N(omega)-L-arginino)succinate = fumarate + L-arginine. It functions in the pathway amino-acid biosynthesis; L-arginine biosynthesis; L-arginine from L-ornithine and carbamoyl phosphate: step 3/3. Its function is as follows. Delta crystallin, the principal crystallin in embryonic lens, is found only in birds and reptiles. This protein may also function as an enzymatically active argininosuccinate lyase. This is Argininosuccinate lyase (ASL2) from Gallus gallus (Chicken).